The sequence spans 92 residues: Enhancer of yellow 2 transcription factor (92 aa).

Belongs to the ENY2 family. In terms of assembly, component of the nuclear pore complex (NPC)-associated TREX-2 complex (transcription and export complex 2). Component of the SAGA transcription coactivator-HAT complex. Within the SAGA complex, participates in a subcomplex of SAGA called the DUB module (deubiquitination module).

It is found in the nucleus. Its subcellular location is the nucleoplasm. Functionally, involved in mRNA export coupled transcription activation by association with both the TREX-2 and the SAGA complexes. The transcription regulatory histone acetylation (HAT) complex SAGA is a multiprotein complex that activates transcription by remodeling chromatin and mediating histone acetylation and deubiquitination. Within the SAGA complex, participates in a subcomplex that specifically deubiquitinates histones. The SAGA complex is recruited to specific gene promoters by activators, where it is required for transcription. The TREX-2 complex functions in docking export-competent ribonucleoprotein particles (mRNPs) to the nuclear entrance of the nuclear pore complex (nuclear basket). TREX-2 participates in mRNA export and accurate chromatin positioning in the nucleus by tethering genes to the nuclear periphery. In Aedes aegypti (Yellowfever mosquito), this protein is Enhancer of yellow 2 transcription factor.